The primary structure comprises 348 residues: Dihydroorotase (348 aa).

The Zn(2+) site is built by histidine 17 and histidine 19. Residues 19-21 (HLR) and asparagine 45 contribute to the substrate site. Zn(2+) contacts are provided by lysine 103, histidine 140, and histidine 178. N6-carboxylysine is present on lysine 103. Histidine 140 is a binding site for substrate. Leucine 223 lines the substrate pocket. Aspartate 251 is a Zn(2+) binding site. Residue aspartate 251 is part of the active site. Positions 255 and 267 each coordinate substrate.

It belongs to the metallo-dependent hydrolases superfamily. DHOase family. Class II DHOase subfamily. Homodimer. It depends on Zn(2+) as a cofactor.

It carries out the reaction (S)-dihydroorotate + H2O = N-carbamoyl-L-aspartate + H(+). Its pathway is pyrimidine metabolism; UMP biosynthesis via de novo pathway; (S)-dihydroorotate from bicarbonate: step 3/3. Functionally, catalyzes the reversible cyclization of carbamoyl aspartate to dihydroorotate. This chain is Dihydroorotase, found in Salmonella paratyphi A (strain ATCC 9150 / SARB42).